The following is a 210-amino-acid chain: dITP/XTP pyrophosphatase (210 aa).

Residue 13-18 (THNPGK) coordinates substrate. Positions 45 and 74 each coordinate Mg(2+). D74 acts as the Proton acceptor in catalysis. Substrate-binding positions include S75, 160–163 (FGYD), K183, and 195–196 (HR).

The protein belongs to the HAM1 NTPase family. In terms of assembly, homodimer. The cofactor is Mg(2+).

It catalyses the reaction XTP + H2O = XMP + diphosphate + H(+). It carries out the reaction dITP + H2O = dIMP + diphosphate + H(+). The catalysed reaction is ITP + H2O = IMP + diphosphate + H(+). In terms of biological role, pyrophosphatase that catalyzes the hydrolysis of nucleoside triphosphates to their monophosphate derivatives, with a high preference for the non-canonical purine nucleotides XTP (xanthosine triphosphate), dITP (deoxyinosine triphosphate) and ITP. Seems to function as a house-cleaning enzyme that removes non-canonical purine nucleotides from the nucleotide pool, thus preventing their incorporation into DNA/RNA and avoiding chromosomal lesions. This is dITP/XTP pyrophosphatase from Rhodopseudomonas palustris (strain ATCC BAA-98 / CGA009).